We begin with the raw amino-acid sequence, 338 residues long: Aspartate-semialdehyde dehydrogenase (338 aa).

NADP(+) contacts are provided by residues 13–16 (TGNV) and 41–42 (NS). R101 lines the phosphate pocket. C132 acts as the Acyl-thioester intermediate in catalysis. Residue Q159 coordinates substrate. NADP(+) is bound by residues 162-163 (SG) and P187. K216 contributes to the phosphate binding site. Substrate is bound at residue R237. H244 acts as the Proton acceptor in catalysis. An NADP(+)-binding site is contributed by N317.

It belongs to the aspartate-semialdehyde dehydrogenase family. In terms of assembly, homodimer.

The enzyme catalyses L-aspartate 4-semialdehyde + phosphate + NADP(+) = 4-phospho-L-aspartate + NADPH + H(+). It participates in amino-acid biosynthesis; L-lysine biosynthesis via DAP pathway; (S)-tetrahydrodipicolinate from L-aspartate: step 2/4. Its pathway is amino-acid biosynthesis; L-methionine biosynthesis via de novo pathway; L-homoserine from L-aspartate: step 2/3. The protein operates within amino-acid biosynthesis; L-threonine biosynthesis; L-threonine from L-aspartate: step 2/5. Its function is as follows. Catalyzes the NADPH-dependent formation of L-aspartate-semialdehyde (L-ASA) by the reductive dephosphorylation of L-aspartyl-4-phosphate. The polypeptide is Aspartate-semialdehyde dehydrogenase (Rickettsia typhi (strain ATCC VR-144 / Wilmington)).